Here is a 175-residue protein sequence, read N- to C-terminus: Isopentenyl-diphosphate Delta-isomerase (175 aa).

Residues His-22 and His-29 each coordinate Mn(2+). Residues 27–160 (KLHRAFSVLL…PAAYTPWLAE (134 aa)) form the Nudix hydrolase domain. Cys-64 is a catalytic residue. A Mg(2+)-binding site is contributed by Cys-64. His-66 provides a ligand contact to Mn(2+). Residue Glu-84 coordinates Mg(2+). Positions 110 and 112 each coordinate Mn(2+). Glu-112 is a catalytic residue.

This sequence belongs to the IPP isomerase type 1 family. Mg(2+) serves as cofactor. It depends on Mn(2+) as a cofactor.

The protein resides in the cytoplasm. The enzyme catalyses isopentenyl diphosphate = dimethylallyl diphosphate. It functions in the pathway isoprenoid biosynthesis; dimethylallyl diphosphate biosynthesis; dimethylallyl diphosphate from isopentenyl diphosphate: step 1/1. In terms of biological role, catalyzes the 1,3-allylic rearrangement of the homoallylic substrate isopentenyl (IPP) to its highly electrophilic allylic isomer, dimethylallyl diphosphate (DMAPP). The protein is Isopentenyl-diphosphate Delta-isomerase of Nocardia farcinica (strain IFM 10152).